A 471-amino-acid polypeptide reads, in one-letter code: ATP synthase subunit beta (471 aa).

154–161 lines the ATP pocket; it reads GGAGVGKT.

It belongs to the ATPase alpha/beta chains family. As to quaternary structure, F-type ATPases have 2 components, CF(1) - the catalytic core - and CF(0) - the membrane proton channel. CF(1) has five subunits: alpha(3), beta(3), gamma(1), delta(1), epsilon(1). CF(0) has three main subunits: a(1), b(2) and c(9-12). The alpha and beta chains form an alternating ring which encloses part of the gamma chain. CF(1) is attached to CF(0) by a central stalk formed by the gamma and epsilon chains, while a peripheral stalk is formed by the delta and b chains.

Its subcellular location is the cell membrane. It catalyses the reaction ATP + H2O + 4 H(+)(in) = ADP + phosphate + 5 H(+)(out). Produces ATP from ADP in the presence of a proton gradient across the membrane. The catalytic sites are hosted primarily by the beta subunits. This chain is ATP synthase subunit beta, found in Mesomycoplasma hyopneumoniae (strain 7448) (Mycoplasma hyopneumoniae).